Reading from the N-terminus, the 243-residue chain is Uridylate kinase (243 aa).

18–21 (KLGG) contributes to the ATP binding site. Gly59 is a binding site for UMP. ATP-binding residues include Gly60 and Arg64. UMP is bound by residues Asp79 and 140–147 (MGMPYFST). Tyr173 and Asp176 together coordinate ATP.

Belongs to the UMP kinase family. As to quaternary structure, homohexamer.

The protein localises to the cytoplasm. It catalyses the reaction UMP + ATP = UDP + ADP. The protein operates within pyrimidine metabolism; CTP biosynthesis via de novo pathway; UDP from UMP (UMPK route): step 1/1. With respect to regulation, inhibited by UTP. In terms of biological role, catalyzes the reversible phosphorylation of UMP to UDP. The polypeptide is Uridylate kinase (Corynebacterium diphtheriae (strain ATCC 700971 / NCTC 13129 / Biotype gravis)).